Reading from the N-terminus, the 287-residue chain is Ribosomal RNA small subunit methyltransferase I (287 aa).

It belongs to the methyltransferase superfamily. RsmI family.

The protein resides in the cytoplasm. It catalyses the reaction cytidine(1402) in 16S rRNA + S-adenosyl-L-methionine = 2'-O-methylcytidine(1402) in 16S rRNA + S-adenosyl-L-homocysteine + H(+). Its function is as follows. Catalyzes the 2'-O-methylation of the ribose of cytidine 1402 (C1402) in 16S rRNA. In Streptococcus pyogenes serotype M18 (strain MGAS8232), this protein is Ribosomal RNA small subunit methyltransferase I.